We begin with the raw amino-acid sequence, 388 residues long: FMRFamide neuropeptides (388 aa).

The N-terminal stretch at 1 to 21 is a signal peptide; it reads MVAPLLVFLFSLQLCHTTSWA. The propeptide occupies 22 to 172; sequence YVGGNSLNSN…SNHQVIRDSR (151 aa). Residues 40 to 74 form a disordered region; the sequence is FPAGTSNEVPEDAANGQDDNDDSQLTEPNDNNAPL. The span at 64–74 shows a compositional bias: polar residues; the sequence is LTEPNDNNAPL. Phenylalanine amide is present on residues phenylalanine 179, phenylalanine 196, phenylalanine 208, phenylalanine 219, phenylalanine 230, phenylalanine 241, phenylalanine 253, phenylalanine 265, phenylalanine 277, phenylalanine 289, phenylalanine 301, phenylalanine 313, phenylalanine 325, phenylalanine 337, phenylalanine 346, phenylalanine 359, and phenylalanine 372. A disordered region spans residues 360–388; that stretch reads GRTPTQSSDFMRFGKSLDKSENKTSDLQK. Basic and acidic residues predominate over residues 374–388; it reads KSLDKSENKTSDLQK. The propeptide occupies 375–388; it reads SLDKSENKTSDLQK.

The protein belongs to the FARP (FMRFamide related peptide) family. As to expression, in the brain, expressed in 2 large cells in the lateral neurons in each optic lobe, 2 slightly bigger cells on both sides of the tritocerebrum, around 14 small cells in the dorsal area, around 13 cells in the subesophageal ganglion, and in the central brain.

It localises to the secreted. This chain is FMRFamide neuropeptides, found in Musca domestica (House fly).